The chain runs to 333 residues: Sphingomyelinase C (333 aa).

The first 26 residues, 1–26 (MKGKLLKGVLSLGVGLGALYSGTSAQ), serve as a signal peptide directing secretion. Cys150 and Cys186 are joined by a disulfide.

It belongs to the neutral sphingomyelinase family. Mg(2+) serves as cofactor. The N-terminus is blocked.

Its subcellular location is the secreted. The catalysed reaction is a sphingomyelin + H2O = phosphocholine + an N-acylsphing-4-enine + H(+). Activated by cobalt and manganese ions. Required, with sphingomyelinase, to effect target cell lysis (hemolysis). This Bacillus cereus protein is Sphingomyelinase C (cerB).